Reading from the N-terminus, the 318-residue chain is Transaldolase (318 aa).

The active-site Schiff-base intermediate with substrate is the Lys132.

Belongs to the transaldolase family. Type 1 subfamily. Homodimer.

The protein resides in the cytoplasm. The enzyme catalyses D-sedoheptulose 7-phosphate + D-glyceraldehyde 3-phosphate = D-erythrose 4-phosphate + beta-D-fructose 6-phosphate. The protein operates within carbohydrate degradation; pentose phosphate pathway; D-glyceraldehyde 3-phosphate and beta-D-fructose 6-phosphate from D-ribose 5-phosphate and D-xylulose 5-phosphate (non-oxidative stage): step 2/3. Its function is as follows. Transaldolase is important for the balance of metabolites in the pentose-phosphate pathway. The chain is Transaldolase from Shewanella loihica (strain ATCC BAA-1088 / PV-4).